Reading from the N-terminus, the 439-residue chain is Hemagglutinin-esterase (439 aa).

The signal sequence occupies residues 1–22 (MGSTCIAMAPRTLLLLIGCQLV). The tract at residues 12–132 (TLLLLIGCQL…DNKRWMGNKA (121 aa)) is esterase domain 1. The Virion surface portion of the chain corresponds to 23–407 (FGFNEPLNIV…PVCIYDPLPV (385 aa)). Ser-45 serves as the catalytic Nucleophile. Cys-49 and Cys-70 are oxidised to a cystine. Asn-94 is a glycosylation site (N-linked (GlcNAc...) asparagine; by host). Residues Cys-118 and Cys-167 are joined by a disulfide bond. Residues 133-281 (RFYARVYEKM…GNYKAVSLEY (149 aa)) are receptor binding. 4 N-linked (GlcNAc...) asparagine; by host glycosylation sites follow: Asn-196, Asn-246, Asn-309, and Asn-316. Intrachain disulfides connect Cys-202/Cys-291 and Cys-210/Cys-264. The interval 282 to 395 (LLSLPSKAIC…QCPTAANIGY (114 aa)) is esterase domain 2. An intrachain disulfide couples Cys-322 to Cys-327. N-linked (GlcNAc...) asparagine; by host glycosylation occurs at Asn-331. Catalysis depends on charge relay system residues Asp-342 and His-345. N-linked (GlcNAc...) asparagine; by host glycosylation is found at Asn-360 and Asn-374. Cys-363 and Cys-387 are oxidised to a cystine. The chain crosses the membrane as a helical span at residues 408–428 (VLLGVLLGIAVLIIVFLILYF). At 429–439 (MTDSGVRLHEA) the chain is on the intravirion side.

The protein belongs to the influenza type C/coronaviruses hemagglutinin-esterase family. As to quaternary structure, homodimer; disulfide-linked. Forms a complex with the M protein in the pre-Golgi. Associates then with S-M complex to form a ternary complex S-M-HE. In terms of processing, N-glycosylated in the host RER.

The protein localises to the virion membrane. The protein resides in the host cell membrane. The enzyme catalyses N-acetyl-9-O-acetylneuraminate + H2O = N-acetylneuraminate + acetate + H(+). It catalyses the reaction N-acetyl-4-O-acetylneuraminate + H2O = N-acetylneuraminate + acetate + H(+). Structural protein that makes short spikes at the surface of the virus. Contains receptor binding and receptor-destroying activities. Mediates de-O-acetylation of N-acetyl-4-O-acetylneuraminic acid, which is probably the receptor determinant recognized by the virus on the surface of erythrocytes and susceptible cells. This receptor-destroying activity is important for virus release as it probably helps preventing self-aggregation and ensures the efficient spread of the progeny virus from cell to cell. May serve as a secondary viral attachment protein for initiating infection, the spike protein being the major one. May become a target for both the humoral and the cellular branches of the immune system. This is Hemagglutinin-esterase from Murine coronavirus (strain JHM) (MHV-JHM).